Here is a 359-residue protein sequence, read N- to C-terminus: MNIYDQLQAVEDRYEELGELLSDPDVVSDTRRFMELSKEEASNRDTVIAYREYKQVLQNIVDAEEMIKESGGDADLEEMAKQELKDAKAEKEEYEEKLKILLLPKDPNDDKNIILEIRGAAGGDEAALFAGDLLTMYQKYAEAQGWRFEVMEASMNGVGGFKEVVAMVSGQSVYSKLKYESGAHRVQRVPVTESQGRVHTSTATVLVMPEVEEVEYDIDPKDLRVDIYHASGAGGQNVNKVATAVRIVHLPTNIKVEMQEERTQQKNREKAMKIIRARVADHFAQIAQDEQDAERKSTIGTGDRSERIRTYNFPQNRVTDHRIGLTLQKLDTILSGKLDEVMDALVLYDQTQKLEELNK.

Position 236 is an N5-methylglutamine (Q236).

The protein belongs to the prokaryotic/mitochondrial release factor family. In terms of processing, methylated by PrmC. Methylation increases the termination efficiency of RF1.

The protein localises to the cytoplasm. In terms of biological role, peptide chain release factor 1 directs the termination of translation in response to the peptide chain termination codons UAG and UAA. The polypeptide is Peptide chain release factor 1 (Streptococcus pneumoniae (strain Hungary19A-6)).